The chain runs to 299 residues: Ornithine carbamoyltransferase (299 aa).

Residues 52 to 55, Gln-79, Arg-103, and 130 to 133 each bind carbamoyl phosphate; these read STRT and HPCQ. Residues Asn-161, Asp-218, and 222 to 223 contribute to the L-ornithine site; that span reads SM. Carbamoyl phosphate-binding positions include 258–259 and Arg-286; that span reads CL.

It belongs to the aspartate/ornithine carbamoyltransferase superfamily. OTCase family.

It is found in the cytoplasm. The catalysed reaction is carbamoyl phosphate + L-ornithine = L-citrulline + phosphate + H(+). The protein operates within amino-acid biosynthesis; L-arginine biosynthesis; L-arginine from L-ornithine and carbamoyl phosphate: step 1/3. Functionally, reversibly catalyzes the transfer of the carbamoyl group from carbamoyl phosphate (CP) to the N(epsilon) atom of ornithine (ORN) to produce L-citrulline. In Ruthia magnifica subsp. Calyptogena magnifica, this protein is Ornithine carbamoyltransferase.